A 105-amino-acid chain; its full sequence is Host transcription reprogramming factor 7 (105 aa).

Positions 1–19 (MKTKTIFQLVALFAIGATA) are cleaved as a signal peptide. Residues 69–95 (YWCRIGNCNAAFKSLAARCRHEKTAVH) form a C2H2-type zinc finger.

The protein localises to the secreted. The protein resides in the host nucleus. Probable secreted effector that translocates into the nuclei of host cells to reprogram the expression of targeted genes by binding on effector binding elements in rice. The protein is Host transcription reprogramming factor 7 of Pyricularia oryzae (strain 70-15 / ATCC MYA-4617 / FGSC 8958) (Rice blast fungus).